A 1492-amino-acid polypeptide reads, in one-letter code: DNA-directed RNA polymerase subunit beta' (1492 aa).

The Zn(2+) site is built by Cys67, Cys69, Cys82, and Cys85. Residues Asp499, Asp501, and Asp503 each coordinate Mg(2+). Positions 867, 943, 950, and 953 each coordinate Zn(2+).

Belongs to the RNA polymerase beta' chain family. The RNAP catalytic core consists of 2 alpha, 1 beta, 1 beta' and 1 omega subunit. When a sigma factor is associated with the core the holoenzyme is formed, which can initiate transcription. Mg(2+) serves as cofactor. It depends on Zn(2+) as a cofactor.

The catalysed reaction is RNA(n) + a ribonucleoside 5'-triphosphate = RNA(n+1) + diphosphate. Its function is as follows. DNA-dependent RNA polymerase catalyzes the transcription of DNA into RNA using the four ribonucleoside triphosphates as substrates. The protein is DNA-directed RNA polymerase subunit beta' of Chlorobium phaeobacteroides (strain DSM 266 / SMG 266 / 2430).